The following is a 417-amino-acid chain: MLFMEDDEQIRRYEFKRALEELSKLHGRGTELISLYIPPDKQISDVVAYLRDEYSTSSNIKSKSTRKNVLAAIESIMARLKYYKTPPPNGFVFFEGHIATRGDQTEMYTKIIEPPEPITTFMYKCDSEFHLEMLKTMLEEKEIYGLIVIDRKEATVGFLNGTRIEVVDNVQSQVPSKHHQGGQSSRRFERLIEIAANEFFKKVGEIANNAFMPKIKDIRAIFLGGPGATKEYFFEKDYLRNEVKEKIKDLFDVGYTDESGLRELVEKASESIKDMKISKEKDLMNRFLREVRKPDGGLAIYGEQAIRDALEQKMVDLLLISEGLRKVRYTYRCPTCQAELTLNQEPNEWPVCEKDGTPMELVAEDDFIEDLYRLAKESGAQVEIISDQSEEGKLLKQAFGGMAAVLRFIRKDNVQMM.

This sequence belongs to the eukaryotic release factor 1 family. Heterodimer of two subunits, one of which binds GTP.

The protein resides in the cytoplasm. Its function is as follows. Directs the termination of nascent peptide synthesis (translation) in response to the termination codons UAA, UAG and UGA. The chain is Peptide chain release factor subunit 1 (prf1) from Thermoplasma acidophilum (strain ATCC 25905 / DSM 1728 / JCM 9062 / NBRC 15155 / AMRC-C165).